A 123-amino-acid chain; its full sequence is MATINQLVRKPRKRKAKTSDVRALEACPQRRGVCTRVYTTTPKKPNSALRKVCRVRLTNGFEVSSYIGGEGHNLQEHSVVLIRGGRVKDLPGVRYHTVRGALDTSGVNDRKRGRSKYGTKRPK.

The tract at residues 1–22 is disordered; sequence MATINQLVRKPRKRKAKTSDVR. A 3-methylthioaspartic acid modification is found at Asp-89. A disordered region spans residues 101–123; it reads ALDTSGVNDRKRGRSKYGTKRPK. Positions 111 to 123 are enriched in basic residues; it reads KRGRSKYGTKRPK.

It belongs to the universal ribosomal protein uS12 family. Part of the 30S ribosomal subunit. Contacts proteins S8 and S17. May interact with IF1 in the 30S initiation complex.

Functionally, with S4 and S5 plays an important role in translational accuracy. In terms of biological role, interacts with and stabilizes bases of the 16S rRNA that are involved in tRNA selection in the A site and with the mRNA backbone. Located at the interface of the 30S and 50S subunits, it traverses the body of the 30S subunit contacting proteins on the other side and probably holding the rRNA structure together. The combined cluster of proteins S8, S12 and S17 appears to hold together the shoulder and platform of the 30S subunit. The polypeptide is Small ribosomal subunit protein uS12 (Teredinibacter turnerae (strain ATCC 39867 / T7901)).